Reading from the N-terminus, the 92-residue chain is Putative transmembrane protein ORF92 (92 aa).

Transmembrane regions (helical) follow at residues phenylalanine 11–isoleucine 28, phenylalanine 32–serine 52, and phenylalanine 54–glycine 74.

The protein localises to the host membrane. The chain is Putative transmembrane protein ORF92 from Acidianus convivator (ABV).